The primary structure comprises 554 residues: 3-(3-hydroxy-phenyl)propionate/3-hydroxycinnamic acid hydroxylase (554 aa).

Residues 17–46 (QVAI…VVEK) and 285–295 (FRINRVLLAGD) contribute to the FAD site.

The protein belongs to the PheA/TfdB FAD monooxygenase family. FAD is required as a cofactor.

The enzyme catalyses 3-(3-hydroxyphenyl)propanoate + NADH + O2 + H(+) = 3-(2,3-dihydroxyphenyl)propanoate + NAD(+) + H2O. It catalyses the reaction (2E)-3-(3-hydroxyphenyl)prop-2-enoate + NADH + O2 + H(+) = (2E)-3-(2,3-dihydroxyphenyl)prop-2-enoate + NAD(+) + H2O. It functions in the pathway aromatic compound metabolism; 3-phenylpropanoate degradation. Functionally, catalyzes the insertion of one atom of molecular oxygen into position 2 of the phenyl ring of 3-(3-hydroxyphenyl)propionate (3-HPP) and hydroxycinnamic acid (3HCI). This chain is 3-(3-hydroxy-phenyl)propionate/3-hydroxycinnamic acid hydroxylase, found in Klebsiella pneumoniae subsp. pneumoniae (strain ATCC 700721 / MGH 78578).